The chain runs to 394 residues: MAQLETRTEPMVVNFGPHHPSMHGVLRLVVTLDGEDVVDCEPVIGYLHRGMEKIAENRTNVMFVPYVSRMDYAAGMFYEAIVVNAPERLANIKVPKRASYIRAIMLELNRIANHLLWLGPFLADVGAQTPFFYIFREREMIYDLWEAATGQRLINNNYFRIGGVACDLPWGWLEKCKDFCDWFGPKIDEYEKLITNNPIFRRRIEGLGVIGKEQAINWSLSGPMLRAAGVPWDLRKVDHYECYDDFEWDIAWEKEGDCYARYRVRIEEMRQSLKILRQACEMIPGGPTENLEAQRTVEGKKGDLSGFDYQYVAKKVAPTFKIPNGELYTRLESGKGEIGVFIQGNNDVTPWRFKIRAADSNNLQILPHILKGAKVADIMAILGSIDVIMGSVDR.

Belongs to the complex I 49 kDa subunit family. NDH-1 can be composed of about 15 different subunits; different subcomplexes with different compositions have been identified which probably have different functions.

It localises to the cellular thylakoid membrane. It catalyses the reaction a plastoquinone + NADH + (n+1) H(+)(in) = a plastoquinol + NAD(+) + n H(+)(out). The enzyme catalyses a plastoquinone + NADPH + (n+1) H(+)(in) = a plastoquinol + NADP(+) + n H(+)(out). NDH-1 shuttles electrons from an unknown electron donor, via FMN and iron-sulfur (Fe-S) centers, to quinones in the respiratory and/or the photosynthetic chain. The immediate electron acceptor for the enzyme in this species is believed to be plastoquinone. Couples the redox reaction to proton translocation, and thus conserves the redox energy in a proton gradient. Cyanobacterial NDH-1 also plays a role in inorganic carbon-concentration. The sequence is that of NAD(P)H-quinone oxidoreductase subunit H from Prochlorococcus marinus (strain NATL1A).